A 159-amino-acid chain; its full sequence is Phosphopantetheine adenylyltransferase (159 aa).

Thr10 lines the substrate pocket. Residues 10 to 11 and His18 each bind ATP; that span reads TF. The substrate site is built by Lys42, Leu74, and Arg88. ATP is bound by residues 89–91, Glu99, and 124–130; these read GLR and NAFISSS.

It belongs to the bacterial CoaD family. In terms of assembly, homohexamer. It depends on Mg(2+) as a cofactor.

It is found in the cytoplasm. The catalysed reaction is (R)-4'-phosphopantetheine + ATP + H(+) = 3'-dephospho-CoA + diphosphate. It functions in the pathway cofactor biosynthesis; coenzyme A biosynthesis; CoA from (R)-pantothenate: step 4/5. Functionally, reversibly transfers an adenylyl group from ATP to 4'-phosphopantetheine, yielding dephospho-CoA (dPCoA) and pyrophosphate. This chain is Phosphopantetheine adenylyltransferase, found in Campylobacter fetus subsp. fetus (strain 82-40).